A 75-amino-acid polypeptide reads, in one-letter code: uncharacterized protein (75 aa).

Residues 1 to 21 (MRLIVVSIMVTLLSGCGSIIS) form the signal peptide.

The protein to E.coli YidQ.

This is an uncharacterized protein from Escherichia coli O157:H7.